The following is a 324-amino-acid chain: Probable WRKY transcription factor 53 (324 aa).

Residues 93 to 126 form a disordered region; that stretch reads NPGSVPESPASINGSPRSEEFADGGGSSESHHRQ. Residues 152–220 constitute a DNA-binding region (WRKY); sequence GLEGPQDDVF…YRGTHTCSQA (69 aa).

The protein belongs to the WRKY group III family. As to quaternary structure, interacts with ESR/ESP and UPL5. Binds to WRKY30. Ubiquitinated by UPL5. Ubiquitination leads to its subsequent degradation, thus controlling the timing of leaf senescence.

The protein localises to the nucleus. In terms of biological role, transcription factor. Interacts specifically with the W box (5'-(T)TGAC[CT]-3'), a frequently occurring elicitor-responsive cis-acting element. May regulate the early events of leaf senescence. Negatively regulates the expression of ESR/ESP. Together with WRKY46 and WRKY70, promotes resistance to P.syringae, probably by enhancing salicylic acid (SA)- dependent genes. Contributes to the suppression of jasmonic acid (MeJA)-induced expression of PDF1.2. The chain is Probable WRKY transcription factor 53 from Arabidopsis thaliana (Mouse-ear cress).